Here is a 428-residue protein sequence, read N- to C-terminus: Serine--tRNA ligase (428 aa).

235–237 (TAE) lines the L-serine pocket. 266–268 (RSE) contacts ATP. E289 contributes to the L-serine binding site. 353–356 (EISS) serves as a coordination point for ATP. S389 is an L-serine binding site.

Belongs to the class-II aminoacyl-tRNA synthetase family. Type-1 seryl-tRNA synthetase subfamily. In terms of assembly, homodimer. The tRNA molecule binds across the dimer.

It localises to the cytoplasm. It carries out the reaction tRNA(Ser) + L-serine + ATP = L-seryl-tRNA(Ser) + AMP + diphosphate + H(+). The catalysed reaction is tRNA(Sec) + L-serine + ATP = L-seryl-tRNA(Sec) + AMP + diphosphate + H(+). Its pathway is aminoacyl-tRNA biosynthesis; selenocysteinyl-tRNA(Sec) biosynthesis; L-seryl-tRNA(Sec) from L-serine and tRNA(Sec): step 1/1. Its function is as follows. Catalyzes the attachment of serine to tRNA(Ser). Is also able to aminoacylate tRNA(Sec) with serine, to form the misacylated tRNA L-seryl-tRNA(Sec), which will be further converted into selenocysteinyl-tRNA(Sec). The polypeptide is Serine--tRNA ligase (Shewanella sediminis (strain HAW-EB3)).